A 505-amino-acid polypeptide reads, in one-letter code: MQDNPSIQFDDQRLAKRQQLIEAGVPMYPHEFRRSHTIAEIRAKYSQAGHDPSSDQVITAGRLYGVRDHGKTFFADLRDETGRIQLYIRKDALPEGKFQMFKSSIERGDIIGVTGRIFKTKVGEISIFVDDIILLTKTLCSLPEKFHGLTNLEKRYRQRYLDLIVNEESRETFRTRSRIISLLRNYLTGQGFLEFETPTLQPLYGGANARPFTTFHNFLGQKLYLRIAPELYLKRLVVGGFEKVFEVAKNFRNEDIDTSHNPEFSMVEIYQAYADYTDMMKLTEGIISSIVHEVTGSYEVAFEENTISYKAPWTVMSMEEAVRTIGKVDIFAHDLESLKKIGKEKGVDGIDDVHTQREMLVLFFEALVEDKLIQPTFITDFPVENSPLAKSHREKEGFVERFELFIAGMELANGFSELNDPLDQMERFEAQEEKRRLGDEEAQMHDYDFVNALGYGMPPTGGVGIGIDRLVMLITGNTSIKEVILFPSMKREVTTPADEEEPSSV.

Mg(2+) contacts are provided by glutamate 403 and glutamate 410.

This sequence belongs to the class-II aminoacyl-tRNA synthetase family. Homodimer. Mg(2+) is required as a cofactor.

Its subcellular location is the cytoplasm. The catalysed reaction is tRNA(Lys) + L-lysine + ATP = L-lysyl-tRNA(Lys) + AMP + diphosphate. This Methanospirillum hungatei JF-1 (strain ATCC 27890 / DSM 864 / NBRC 100397 / JF-1) protein is Lysine--tRNA ligase.